The sequence spans 150 residues: Phosphoribosyl-AMP cyclohydrolase (150 aa).

Position 93 (aspartate 93) interacts with Mg(2+). Cysteine 94 contributes to the Zn(2+) binding site. Residues aspartate 95 and aspartate 97 each coordinate Mg(2+). Positions 112 and 119 each coordinate Zn(2+).

This sequence belongs to the PRA-CH family. In terms of assembly, homodimer. It depends on Mg(2+) as a cofactor. Zn(2+) is required as a cofactor.

It is found in the cytoplasm. The enzyme catalyses 1-(5-phospho-beta-D-ribosyl)-5'-AMP + H2O = 1-(5-phospho-beta-D-ribosyl)-5-[(5-phospho-beta-D-ribosylamino)methylideneamino]imidazole-4-carboxamide. It functions in the pathway amino-acid biosynthesis; L-histidine biosynthesis; L-histidine from 5-phospho-alpha-D-ribose 1-diphosphate: step 3/9. In terms of biological role, catalyzes the hydrolysis of the adenine ring of phosphoribosyl-AMP. This chain is Phosphoribosyl-AMP cyclohydrolase, found in Rhizobium etli (strain CIAT 652).